Consider the following 532-residue polypeptide: Intercellular adhesion molecule 1 (532 aa).

The signal sequence occupies residues 1 to 27; that stretch reads MAPSSPRPALPALLVLLGALFPGPGNA. The Extracellular portion of the chain corresponds to 28–480; the sequence is QTSVSPPKVI…TVNVLSPRYE (453 aa). Ig-like C2-type domains lie at 41–103 and 128–193; these read GGSV…QSTA and GKDL…LDLR. 3 disulfides stabilise this stretch: Cys48–Cys92, Cys52–Cys96, and Cys135–Cys186. Positions 152 to 154 match the Cell attachment site; atypical motif; it reads RGE. Residues Asn202 and Asn267 are each glycosylated (N-linked (GlcNAc...) asparagine). Ig-like C2-type domains follow at residues 230–297 and 325–378; these read DTQG…LGTQ and GTEV…LEVA. 2 disulfide bridges follow: Cys237/Cys290 and Cys332/Cys371. Residues Asn385 and Asn406 are each glycosylated (N-linked (GlcNAc...) asparagine). 3 cysteine pairs are disulfide-bonded: Cys403–Cys419, Cys419–Cys457, and Cys431–Cys457. The region spanning 412-464 is the Ig-like C2-type 5 domain; sequence NSQQTPMCQAWGNPLPELKCLKDGTFPLPVGESVTVTRDLEGTYLCRARSTQG. A helical transmembrane segment spans residues 481 to 503; it reads FVIIAVVAAAVIMGTAGLSTYLY. Topologically, residues 504–532 are cytoplasmic; sequence NRQRKIRKYRLQQAQKGTPMKPNTQATPP. 2 positions are modified to phosphothreonine: Thr521 and Thr530.

The protein belongs to the immunoglobulin superfamily. ICAM family. In terms of assembly, homodimer. Interacts with MUC1 and promotes cell aggregation in epithelial cells. Interacts with ARHGEF26/SGEF. Interacts (on T cell side) with CD81, CD247 and CD9 at immunological synapses between antigen-presenting cells and T cells. Monoubiquitinated, which is promoted by MARCH9 and leads to endocytosis.

The protein localises to the membrane. ICAM proteins are ligands for the leukocyte adhesion protein LFA-1 (integrin alpha-L/beta-2). During leukocyte trans-endothelial migration, ICAM1 engagement promotes the assembly of endothelial apical cups through ARHGEF26/SGEF and RHOG activation. The chain is Intercellular adhesion molecule 1 (ICAM1) from Gorilla gorilla gorilla (Western lowland gorilla).